The sequence spans 324 residues: Methenyltetrahydromethanopterin cyclohydrolase (324 aa).

The protein belongs to the MCH family.

The protein resides in the cytoplasm. The enzyme catalyses 5,10-methenyl-5,6,7,8-tetrahydromethanopterin + H2O = N(5)-formyl-5,6,7,8-tetrahydromethanopterin + H(+). It participates in one-carbon metabolism; formaldehyde degradation; formate from formaldehyde (H(4)MPT route): step 3/5. Catalyzes the hydrolysis of methenyl-H(4)MPT(+) to 5-formyl-H(4)MPT. This is Methenyltetrahydromethanopterin cyclohydrolase from Methylobacterium nodulans (strain LMG 21967 / CNCM I-2342 / ORS 2060).